The sequence spans 275 residues: 4-diphosphocytidyl-2-C-methyl-D-erythritol kinase (275 aa).

Residue Lys9 is part of the active site. 90–100 contributes to the ATP binding site; that stretch reads PVGGGLGGGSS. Asp132 is a catalytic residue.

This sequence belongs to the GHMP kinase family. IspE subfamily.

The catalysed reaction is 4-CDP-2-C-methyl-D-erythritol + ATP = 4-CDP-2-C-methyl-D-erythritol 2-phosphate + ADP + H(+). The protein operates within isoprenoid biosynthesis; isopentenyl diphosphate biosynthesis via DXP pathway; isopentenyl diphosphate from 1-deoxy-D-xylulose 5-phosphate: step 3/6. Its function is as follows. Catalyzes the phosphorylation of the position 2 hydroxy group of 4-diphosphocytidyl-2C-methyl-D-erythritol. In Sulfurihydrogenibium sp. (strain YO3AOP1), this protein is 4-diphosphocytidyl-2-C-methyl-D-erythritol kinase.